Here is a 913-residue protein sequence, read N- to C-terminus: MQEDLIIQKNLFAIGNDNNKQKEKTKIPEDLSLEDLKKESQKRPRQRKNSTNLINKFKTDLISNKKNVCINEESYSYKTVSKLKLTPVMKHYVTLKEENKDRLLLYRLGDFFECFFEDAVLISNLLEITLTSKDAGKEIGKIPMAGVPHHAMDRYCADLIKKNYSVVICDQLEKSSGNYGTPIKRGITRIITPGTVIEEGMLIAKKNNWITAIYLSEENSNESYEWGISKADVSTGELITLEGQSLSKLFDEIIKLDSSEIIVGSNAVRNLLIKGNSQITYTVSQETNFGINEANYLIKNYFQIANLEGIGLKNLKNATRSLGGLLNYLEKINPSNLDKDSSVKISLDFPQIQYGHNKLIIDYQTQKNLEIKNTQRENNYVGSLLWSIDRTYTCMGARCLRRWIDSPLLNVNEIYKRQNIITNFFESKKLRTDTQNLLRAMGDLERLAGRACAGHASPRDLIAIAEGLKKLPRLKSIIELFKYDLPNWTDQLINIDEGLLELADTISFKLVENPPLSISEGGMIHDGVDNILDGLRNLMDDYSEWLNKEELKERKISKISNLKIQFHKNFGYYISINKSKVNLAPQHWIKRQTLTNEERYITSEIKNKENKIFQIKSRASSKEYEIFCELRNIVAEKTKQIRSIAKSIASLDALLGLSITSIENNFIKPLLIPINDSMTKNSTKIIAGRNPIVEQLLSDKKFVANDISFEDNQKLIILTGPNASGKSCFIRQLGLIQILAQIGSFVPANNAEIKIADRIFTRIGAVDDQSSGQSTFMVEMSETASILNQATSNSLVLLDEIGRGTSTFDGLSIAWSVSEYLAKKIQCNTIFATHYHELNYLKNSNKNIQNFQVLVEQNDDQLIFSHRIVRGGSNKSYGIEAAKLAGVPKEVIEKAKSVLNSLEENNKLNHNIK.

The tract at residues asparagine 18–serine 50 is disordered. Positions asparagine 19–lysine 42 are enriched in basic and acidic residues. Glycine 720–serine 727 serves as a coordination point for ATP.

Belongs to the DNA mismatch repair MutS family.

This protein is involved in the repair of mismatches in DNA. It is possible that it carries out the mismatch recognition step. This protein has a weak ATPase activity. The sequence is that of DNA mismatch repair protein MutS from Prochlorococcus marinus (strain MIT 9301).